The chain runs to 156 residues: Arginine repressor (156 aa).

The protein belongs to the ArgR family.

The protein localises to the cytoplasm. The protein operates within amino-acid biosynthesis; L-arginine biosynthesis [regulation]. Regulates arginine biosynthesis genes. In Edwardsiella ictaluri (strain 93-146), this protein is Arginine repressor.